Here is a 53-residue protein sequence, read N- to C-terminus: MLSWALAFLVIALIAAVFGFGGIASASAGIAQILFFIFLVMFVVALILRAVRG.

Transmembrane regions (helical) follow at residues 4 to 24 (WALAFLVIALIAAVFGFGGIA) and 29 to 48 (GIAQILFFIFLVMFVVALIL).

It belongs to the UPF0391 family.

Its subcellular location is the cell membrane. The protein is UPF0391 membrane protein TM1040_2720 of Ruegeria sp. (strain TM1040) (Silicibacter sp.).